The primary structure comprises 124 residues: Glycine cleavage system H protein (124 aa).

Positions 22-103 (VFVVGITDNA…AYTAWIFKIK (82 aa)) constitute a Lipoyl-binding domain. Lys-63 bears the N6-lipoyllysine mark.

The protein belongs to the GcvH family. As to quaternary structure, the glycine cleavage system is composed of four proteins: P, T, L and H. It depends on (R)-lipoate as a cofactor.

Its function is as follows. The glycine cleavage system catalyzes the degradation of glycine. The H protein shuttles the methylamine group of glycine from the P protein to the T protein. The polypeptide is Glycine cleavage system H protein (Bordetella pertussis (strain Tohama I / ATCC BAA-589 / NCTC 13251)).